Consider the following 200-residue polypeptide: Eukaryotic translation initiation factor isoform 4E (200 aa).

The segment at 1 to 22 is disordered; sequence MATEAPIEATEVPPASATETVA. Residues 44 to 49, lysine 76, and 94 to 95 contribute to the mRNA site; these read QGAAWG and WE. The cysteines at positions 99 and 138 are disulfide-linked. MRNA contacts are provided by residues 145 to 150 and 189 to 192; these read RRSQDK and KRER.

It belongs to the eukaryotic initiation factor 4E family. In terms of assembly, EIF4F is a multi-subunit complex, the composition of which varies with external and internal environmental conditions. It is composed of at least EIF4A, EIF4E and EIF4G. EIF4E is also known to interact with other partners. In higher plants two isoforms of EIF4F have been identified, named isoform EIF4F and isoform EIF(iso)4F. Isoform EIF4F has subunits p220 and p26, whereas isoform EIF(iso)4F has subunits p82 and p28. (Microbial infection) Interacts with viral genome-linked protein (VPg); this interaction is possible in susceptible hosts but impaired in resistant plants. Post-translationally, according to the redox status, the Cys-99-Cys-138 disulfide bridge may have a role in regulating protein function by affecting its ability to bind capped mRNA. In terms of tissue distribution, expressed ubiquitously in seedlings, roots, leaves, sepals, petals, anthers and dehisced pollen, with highest levels in pollen, maturing anthers and roots. Strongly expressed in susceptible plants but not in resistant ones.

It is found in the cytoplasm. The protein localises to the nucleus. Functionally, component of the protein complex eIF4F, which is involved in the recognition of the mRNA cap, ATP-dependent unwinding of 5'-terminal secondary structure and recruitment of mRNA to the ribosome. Recognizes and binds the 7-methylguanosine-containing mRNA cap during an early step in the initiation of protein synthesis and facilitates ribosome binding by inducing the unwinding of the mRNAs secondary structures. Key component of recessive resistance to potyviruses. (Microbial infection) Susceptibility host factor required for viral infection (e.g. potato virus Y (PVY) and pepper mottle virus (PepMoV)) by recruiting viral RNAs to the host ribosomal complex via an interaction with viral genome-linked protein (VPg). This is Eukaryotic translation initiation factor isoform 4E from Nicotiana tabacum (Common tobacco).